The primary structure comprises 329 residues: Vomeronasal type-1 receptor 42 (329 aa).

Residues 1-32 (MGDILFSSPQSMFSHTMNKNSILHTHSIIGKT) are Extracellular-facing. A helical membrane pass occupies residues 33-53 (FFSEIGIGISGNSFLLLVHIL). Topologically, residues 54 to 65 (KFIRGHRPRLTD) are cytoplasmic. The chain crosses the membrane as a helical span at residues 66–86 (LPIGLLSLIHLLMLLVAAFIA). The Extracellular segment spans residues 87 to 109 (TDIFISRRGWDDIICKFLVYLYR). Cysteine 101 and cysteine 188 are disulfide-bonded. The chain crosses the membrane as a helical span at residues 110–130 (VLRGFSLCTTSMLSILQAIIL). The Cytoplasmic segment spans residues 131–150 (SPRSSCLAKFKHISPHHISG). A helical transmembrane segment spans residues 151-171 (AILFLSVLYMLIGSQLLVSII). At 172–209 (ATPNLTMNDFIYVTQSCSILPLSYLMQSIYSTLLAIRE) the chain is on the extracellular side. An N-linked (GlcNAc...) asparagine glycan is attached at asparagine 175. The helical transmembrane segment at 210–230 (FFLISLMVLSNWYMVALLSMH) threads the bilayer. Topologically, residues 231–254 (RKQTQHLHGTNLSPKKSPEQSATQ) are cytoplasmic. The helical transmembrane segment at 255-275 (TILMLISFFLLMTIYDTIVSC) threads the bilayer. The Extracellular segment spans residues 276–285 (SRTMFLNDPT). The chain crosses the membrane as a helical span at residues 286–306 (SYSIELFIMHIYATVSPFVFM). Residues 307 to 329 (STEKHIVNFLRSLGKRVINFNLH) are Cytoplasmic-facing.

It belongs to the G-protein coupled receptor 1 family.

The protein localises to the cell membrane. Putative pheromone receptor implicated in the regulation of social and reproductive behavior. The polypeptide is Vomeronasal type-1 receptor 42 (Vmn1r42) (Mus musculus (Mouse)).